The chain runs to 103 residues: Large ribosomal subunit protein bL21 (103 aa).

The protein belongs to the bacterial ribosomal protein bL21 family. As to quaternary structure, part of the 50S ribosomal subunit. Contacts protein L20.

This protein binds to 23S rRNA in the presence of protein L20. This Aliivibrio salmonicida (strain LFI1238) (Vibrio salmonicida (strain LFI1238)) protein is Large ribosomal subunit protein bL21.